We begin with the raw amino-acid sequence, 218 residues long: Glutathione S-transferase Mu 2 (218 aa).

The GST N-terminal domain occupies Pro-2–Gly-88. Tyr-7 to Trp-8 lines the glutathione pocket. 2 positions are modified to phosphoserine: Ser-27 and Ser-44. Glutathione is bound by residues Arg-43 to Trp-46, Lys-50, Asn-59 to Leu-60, and Gln-72 to Ser-73. The region spanning Thr-90–Val-208 is the GST C-terminal domain. A substrate-binding site is contributed by Tyr-116.

The protein belongs to the GST superfamily. Mu family. In terms of assembly, homodimer.

Its subcellular location is the cytoplasm. It carries out the reaction RX + glutathione = an S-substituted glutathione + a halide anion + H(+). It catalyses the reaction 11(S)-hydroxy-14(S),15(S)-epoxy-(5Z,8Z,12E)-eicosatrienoate + glutathione = (11S,15S)-dihydroxy-14(R)-S-glutathionyl-(5Z,8Z,12E)-eicosatrienoate. In terms of biological role, conjugation of reduced glutathione to a wide number of exogenous and endogenous hydrophobic electrophiles. Participates in the formation of novel hepoxilin regioisomers. Has activity toward aflatoxin B(1)-8,9-epoxide (AFBO). The polypeptide is Glutathione S-transferase Mu 2 (GSTM2) (Macaca fascicularis (Crab-eating macaque)).